We begin with the raw amino-acid sequence, 196 residues long: Peptidyl-tRNA hydrolase (196 aa).

Residue Tyr14 participates in tRNA binding. Residue His19 is the Proton acceptor of the active site. TRNA-binding residues include Phe64, Asn66, and Asn112.

This sequence belongs to the PTH family. Monomer.

Its subcellular location is the cytoplasm. It catalyses the reaction an N-acyl-L-alpha-aminoacyl-tRNA + H2O = an N-acyl-L-amino acid + a tRNA + H(+). In terms of biological role, hydrolyzes ribosome-free peptidyl-tRNAs (with 1 or more amino acids incorporated), which drop off the ribosome during protein synthesis, or as a result of ribosome stalling. Catalyzes the release of premature peptidyl moieties from peptidyl-tRNA molecules trapped in stalled 50S ribosomal subunits, and thus maintains levels of free tRNAs and 50S ribosomes. The polypeptide is Peptidyl-tRNA hydrolase (Solibacter usitatus (strain Ellin6076)).